The following is a 109-amino-acid chain: Fluorescence recovery protein (109 aa).

Probably a dimer, interacts with the C-terminal domain of OCP-R.

It localises to the cellular thylakoid membrane. In terms of biological role, destabilizes orange carotenoid protein-R form (OCP-R), the FRP-OCP interaction accelerates the OCP-R to OCP-O conversion. Increases fluorescence recovery following non-photochemical quenching (NPQ) by OCP, most probably by destabilizing OCP-R binding to the phycobilisome core. In Synechocystis sp. (strain ATCC 27184 / PCC 6803 / Kazusa), this protein is Fluorescence recovery protein (frp).